The following is a 443-amino-acid chain: uncharacterized protein (443 aa).

The next 10 helical transmembrane spans lie at 7-29 (VSLY…MLNT), 68-87 (YISS…SIFT), 94-111 (VLSL…YAIF), 121-143 (VTLF…SMFA), 150-164 (IVII…SLTC), 179-201 (IIST…YIFF), 206-225 (LIIK…FAIS), 358-375 (IRFI…FIRN), 382-399 (LFVV…SFFG), and 409-431 (LFGM…IYKI).

The protein localises to the cell membrane. This is an uncharacterized protein from Escherichia coli (strain K12).